Reading from the N-terminus, the 99-residue chain is UPF0235 protein Sbal_3028 (99 aa).

It belongs to the UPF0235 family.

The sequence is that of UPF0235 protein Sbal_3028 from Shewanella baltica (strain OS155 / ATCC BAA-1091).